The sequence spans 656 residues: Solute carrier family 5 member 4A (656 aa).

Over 1 to 28 the chain is Cytoplasmic; the sequence is MASTASVSTSTASSELSSLSNNINNAAD. The helical transmembrane segment at 29-47 threads the bilayer; it reads ISVIVIYFVVVMAVGVWAM. At 48-64 the chain is on the extracellular side; sequence LKTNRSTVGGFFLAGRS. The chain crosses the membrane as a helical span at residues 65 to 85; sequence MTWWPMGASLFASNIGSGHFV. Over 86-105 the chain is Cytoplasmic; the sequence is GLAGTGAASGIAVTAFESHS. Residues 106-126 form a helical membrane-spanning segment; the sequence is FALLLVLGWIFVPIYIKAGVM. The Extracellular portion of the chain corresponds to 127–171; it reads TMPEYLKKRFGGKRLQIYLSILFLFICVILTISADIFSGAIFIKL. A helical transmembrane segment spans residues 172–191; that stretch reads ALGLNLYLAILILLAITAIF. Topologically, residues 192–208 are cytoplasmic; it reads TITGGLASVIYTDTVQA. The helical transmembrane segment at 209–229 threads the bilayer; it reads VIMLVGSFILMVFAFVEVGGY. Residues 230–270 are Extracellular-facing; it reads ESFTEKFMNAIPSVVEGDNLTINSRCYTPQPDSFHIFRDPV. An N-linked (GlcNAc...) asparagine glycan is attached at N248. A helical transmembrane segment spans residues 271–291; sequence TGDIPWPGTAFGMPITALWYW. Over 292-314 the chain is Cytoplasmic; sequence CINQVIVQRCLCGKNLSHVKAAC. A helical transmembrane segment spans residues 315 to 334; sequence ILCGYLKLLPLFFMVMPGMI. The Extracellular segment spans residues 335–423; it reads SRILYTDMVA…RKKASERELL (89 aa). A helical transmembrane segment spans residues 424–443; that stretch reads IAGRLFVSVLIVTSILWVPI. At 444 to 455 the chain is on the cytoplasmic side; it reads VEVSQGGQLVHY. Residues 456–476 traverse the membrane as a helical segment; that stretch reads TEAISSYLGPPIAAVFLVAVF. The Extracellular segment spans residues 477–526; it reads CKRANEQGAFWGLMVGLVMGLIRMIAEFSYGTGSCLAPSSCPKIICGVHY. A helical transmembrane segment spans residues 527–547; it reads LYFAIILFFVCILVILGVSYL. Over 548 to 634 the chain is Cytoplasmic; it reads TKPIPDVHLH…TDTTEKPFWR (87 aa). Positions 574 to 593 are disordered; sequence DAEDKEENGADDRTEEDQTE. A helical membrane pass occupies residues 635–655; it reads TVMNVNVILLLAVAAFFYGYF.

Belongs to the sodium:solute symporter (SSF) (TC 2.A.21) family. As to expression, expressed in small intestine. Expressed in kidney.

Its subcellular location is the cell membrane. Its activity is regulated as follows. Not inhibited by phlorizin. Does not function as sodium/D-glucose symporter. Generates D-glucose-induced depolarization in a pH-dependent manner, with activity in acidic conditions (pH 5) but not neutral conditions. This is Solute carrier family 5 member 4A from Mus musculus (Mouse).